Reading from the N-terminus, the 332-residue chain is 2,3-diketo-L-gulonate reductase (332 aa).

Catalysis depends on histidine 44, which acts as the Proton donor. NAD(+)-binding positions include 168 to 174 (ITMVDMS), 224 to 225 (WK), and 304 to 306 (GHE).

It belongs to the LDH2/MDH2 oxidoreductase family. DlgD subfamily. Homodimer.

It localises to the cytoplasm. It carries out the reaction 3-dehydro-L-gulonate + NAD(+) = 2,3-dioxo-L-gulonate + NADH + H(+). It catalyses the reaction 3-dehydro-L-gulonate + NADP(+) = 2,3-dioxo-L-gulonate + NADPH + H(+). Its function is as follows. Catalyzes the reduction of 2,3-diketo-L-gulonate in the presence of NADH, to form 3-keto-L-gulonate. In Salmonella paratyphi A (strain ATCC 9150 / SARB42), this protein is 2,3-diketo-L-gulonate reductase.